Here is an 858-residue protein sequence, read N- to C-terminus: Potassium channel KOR1 (858 aa).

The disordered stretch occupies residues 1–41 (MGRGIGSKRRVEDDDGENMPGRKKKEEEEEEEDDDGEEEYE). At 1 to 102 (MGRGIGSKRR…PDNKWYRLWT (102 aa)) the chain is on the cytoplasmic side. The span at 27-41 (EEEEEEDDDGEEEYE) shows a compositional bias: acidic residues. The chain crosses the membrane as a helical span at residues 103–123 (RFILVWAVYSSFFTPLEFGFF). The Extracellular portion of the chain corresponds to 124–130 (RGLPRNL). The helical transmembrane segment at 131-151 (FFLDIAGQIAFLIDIVLRFFV) threads the bilayer. The Cytoplasmic portion of the chain corresponds to 152-174 (AYRDPDTYRMVHNPTSIALRYCK). Residues 175–195 (SSFIFDLLGCFPWDAIYKACG) traverse the membrane as a helical segment. Topologically, residues 196–201 (SKEEVR) are extracellular. Residues 202-222 (YLLWIRLTRAMKVTEFFRSME) form a helical; Voltage-sensor membrane-spanning segment. The Cytoplasmic portion of the chain corresponds to 223–236 (KDIRINYLFTRIVK). Residues 237–257 (LIVVELYCTHTAACIFYYLAT) form a helical membrane-spanning segment. Over 258–292 (TLPESMEGYTWIGSLQLGDYSYSHFREIDLTKRYM) the chain is Extracellular. The segment at residues 293–312 (TSLYFAIVTMATVGYGDIHA) is an intramembrane region (pore-forming). Over 313–316 (VNVR) the chain is Extracellular. Residues 317–337 (EMIFIMIYVSFDMILGAYLIG) traverse the membrane as a helical segment. Residues 338–858 (NMTALIVKGS…GDDGGTEARQ (521 aa)) are Cytoplasmic-facing. 419-539 (LFKGCSAEFI…RRILSNLSES (121 aa)) contributes to the a nucleoside 3',5'-cyclic phosphate binding site. ANK repeat units lie at residues 559–592 (KQEAELTLRVNNAAFYGDMHQLKSLIRAGADPKN), 596–625 (DGRSPLHLAACKGFEDVVQFLLHEGVDIDL), 629–658 (FGNTPLLEAVKQGHDRVATLLFSKGAKLSL), 660–689 (NAGSHLCTAVARGDTDFVRRALAYGGDPNA), 693–722 (DHRAPLHIAAAEGLYLMAKLLVDAGASVFA), and 726–756 (WGTTPLDEGRRCGSRTMVQLLEAAKSGELSR). One can recognise a KHA domain in the interval 772-858 (RCSVFPHHPW…GDDGGTEARQ (87 aa)).

This sequence belongs to the potassium channel family. Plant (TC 1.A.1.4) subfamily.

The protein localises to the membrane. Its function is as follows. Probable outward-rectifying potassium channel. The polypeptide is Potassium channel KOR1 (Oryza sativa subsp. japonica (Rice)).